A 307-amino-acid chain; its full sequence is Protoheme IX farnesyltransferase (307 aa).

Transmembrane regions (helical) follow at residues 31–51 (VMSL…YSVH), 52–72 (PFIA…AGAI), 102–119 (ALSF…FMAL), 123–145 (LLAS…IWLK), 151–171 (NIVI…AAVS), 179–199 (VILF…LALF), 225–245 (ILIY…IGMS), 247–267 (FIYL…AGSL), and 281–301 (FVYS…TNTI).

It belongs to the UbiA prenyltransferase family. Protoheme IX farnesyltransferase subfamily.

The protein resides in the cell inner membrane. The enzyme catalyses heme b + (2E,6E)-farnesyl diphosphate + H2O = Fe(II)-heme o + diphosphate. It functions in the pathway porphyrin-containing compound metabolism; heme O biosynthesis; heme O from protoheme: step 1/1. Its function is as follows. Converts heme B (protoheme IX) to heme O by substitution of the vinyl group on carbon 2 of heme B porphyrin ring with a hydroxyethyl farnesyl side group. The protein is Protoheme IX farnesyltransferase of Rickettsia canadensis (strain McKiel).